The chain runs to 253 residues: Peptidase inhibitor R3HDML (253 aa).

The N-terminal stretch at 1–23 is a signal peptide; that stretch reads MPLLSSIVGLTGLLLWMGHTVGA. Positions 24–56 are excised as a propeptide; sequence LRMPNTTLVQGRPKNTAVWPLSGLGVPRHRRKR. Asn28 and Asn120 each carry an N-linked (GlcNAc...) asparagine glycan. In terms of domain architecture, SCP spans 67–207; that stretch reads LDYHNHIRAS…QQAVYLVCNY (141 aa).

Belongs to the CRISP family.

The protein resides in the secreted. Putative serine protease inhibitor. This is Peptidase inhibitor R3HDML (R3hdml) from Mus musculus (Mouse).